A 1174-amino-acid chain; its full sequence is Nucleolar complex protein 1 (1174 aa).

6 disordered regions span residues 1–20 (MPAA…NKKI), 29–237 (VVKQ…EESQ), 715–742 (YEDV…VKSS), 893–922 (AQNK…LKEG), 944–1085 (GVDE…GGRS), and 1116–1174 (VKGQ…KRKH). The span at 33-63 (NKKEHPQRPKFEGKEQVKKPQKIKFGEDGKA) shows a compositional bias: basic and acidic residues. Polar residues predominate over residues 95–104 (ASKSFNQNHK). Basic and acidic residues-rich tracts occupy residues 113–122 (KFGEDREAVH) and 176–200 (KFGD…EDGA). 2 stretches are compositionally biased toward acidic residues: residues 207–216 (SDGDSDEELG) and 715–724 (YEDVKDEADD). 2 stretches are compositionally biased toward basic and acidic residues: residues 725 to 739 (TKDS…DNDV) and 897 to 906 (KQKEIKKDAA). Acidic residues-rich tracts occupy residues 907–916 (EEGDDGEAGE), 945–954 (VDEEQDEEEL), 981–1038 (AEDE…DEGS), and 1048–1065 (DSSD…DDED). Positions 1127–1143 (NKDKSSDKQLKWEENRR) are enriched in basic and acidic residues. Over residues 1156 to 1166 (GKPAAKGGRPQ) the composition is skewed to low complexity.

This sequence belongs to the CBF/MAK21 family.

Its subcellular location is the nucleus. The protein resides in the nucleolus. Functionally, involved in rRNA processing and ribosome maturation. May also act as a transcription factor. This Drosophila melanogaster (Fruit fly) protein is Nucleolar complex protein 1.